We begin with the raw amino-acid sequence, 859 residues long: MYILVWKKGQQIKTFHTLDEAAQFKAASNIDEAQMFSVTVAPAISASGGSNEATNLRRLMYLSKSTNPEECNPQFLAEMARVATIRNREIGVSGFLMYSSPFFFQVIEGTDEDLDFLFAKISADPRHERCIVLANGPCTGRMYGDWHMKDSHMDSITTHPAMKTILYQIARSFSSMWSYLPKSAGNMLLLGKDPAAQPPEPMSVVVTFIYLVEFGSILSNPNLTEQAAEVLSTFVDVCVKNVEGSGGNIAKFITGICMAYWPINRTEEALTAIQQISEDLAQLRSQQAPGSAVSLMYSQAGVHYGRAMLCNAGSRKSDFTLLGDCINTTSRIATLAKKLKTPLLFSFEVRCLLGDEMREEIEGAGMHQVKGRDKPVVVYQFPGPELDVEMVRQKIEQFTPGRFRCQMPVVEYEALPISQRPPIFDDTPKGNPRPRTPGYGGRQRSDSLVDRLIMIAKLAGPSVSATGDTTLTTLTYISQATRPMSRLDLSAIMRTATRRNAQQSITGTLLHVNGLFVQTLEGPKDAVVNLYLRIRQDPRHTDVTTVHMAPLQERVYPSEWTLTSATEEMLATFPPLQDVLSQLAKSFTSLETYVPSTVVRYLTAGNNPRNLMPVSCGVVMLATDICSFTSLTEKSSLTEVWMICNTFIDACTSAICQEGGEVIKLIGDCVTAYFPGNNADSAVAAAQELFTFCRQLREAFVDVLDVRGCVSCGVGLDYGQVVMAQCGSLGLTEYVVAGAVSARVMEVEAITREVGYAIVVTEPVADRLSPQLRDHGIVPTPQAIEGLPCYGIAGEEFELDVDSIKRGIKALHAARSGEKPLTEPEEAKPDFRVSPGRVRHGDSGRRSNSAQGKRSIQVR.

One can recognise a BLUF 1 domain in the interval 56-149 (LRRLMYLSKS…GRMYGDWHMK (94 aa)). Positions 205-333 (VVTFIYLVEF…DCINTTSRIA (129 aa)) constitute a Guanylate cyclase 1 domain. Residues 420–443 (RPPIFDDTPKGNPRPRTPGYGGRQ) form a disordered region. The region spanning 471–563 (LTTLTYISQA…RVYPSEWTLT (93 aa)) is the BLUF 2 domain. Residues 619 to 748 (VMLATDICSF…AVSARVMEVE (130 aa)) form the Guanylate cyclase 2 domain. Positions 813–859 (AARSGEKPLTEPEEAKPDFRVSPGRVRHGDSGRRSNSAQGKRSIQVR) are disordered. The segment covering 815–831 (RSGEKPLTEPEEAKPDF) has biased composition (basic and acidic residues). Over residues 846 to 859 (RSNSAQGKRSIQVR) the composition is skewed to polar residues.

This sequence belongs to the adenylyl cyclase class-4/guanylyl cyclase family. In terms of assembly, heterotetramer of two alpha and two beta subunits. The cofactor is FAD.

It localises to the cell projection. Its subcellular location is the cilium. The protein resides in the flagellum. It carries out the reaction ATP = 3',5'-cyclic AMP + diphosphate. With respect to regulation, activity increased by up to 80-fold under blue light. In terms of biological role, acts as a blue light photoreceptor for the step-up photophobic response. Mediates photoavoidance. In Euglena gracilis, this protein is Photoactivated adenylate cyclase subunit beta.